Consider the following 436-residue polypeptide: ATP-sensitive inward rectifier potassium channel 14 (436 aa).

Residues 1–83 are Cytoplasmic-facing; it reads MGLARALRRL…LSDLFTTCVD (83 aa). A disordered region spans residues 14 to 43; that stretch reads LDSGDSRAGDEEEAGPGLCRNGWAPAPVQS. S-nitrosocysteine is present on C81. A helical membrane pass occupies residues 84–110; sequence VRWRWMCLLFSCSFLASWLLFGLAFWL. The Extracellular segment spans residues 111–133; sequence IASLHGDLAAPPPPAPCFSHVAS. The helical; Pore-forming intramembrane region spans 134-150; sequence FLAAFLFALETQTSIGY. The Selectivity filter motif lies at 147–152; the sequence is SIGYGV. The Extracellular segment spans residues 151-159; it reads GVRSVTEEC. The chain crosses the membrane as a helical span at residues 160-187; it reads PAAVAAVVLQCIAGCVLDAFVVGAVMAK. Residues 188-436 lie on the Cytoplasmic side of the membrane; sequence MAKPKKRNET…TPTLALTLPP (249 aa). The span at 400-418 shows a compositional bias: acidic residues; that stretch reads QEEDEDDETEEGNGVETED. A disordered region spans residues 400 to 436; the sequence is QEEDEDDETEEGNGVETEDGAASPRVLTPTLALTLPP. Residues 426-436 are compositionally biased toward low complexity; sequence LTPTLALTLPP.

Belongs to the inward rectifier-type potassium channel (TC 1.A.2.1) family. KCNJ14 subfamily. As to expression, expressed preferentially in retina.

The protein resides in the membrane. It carries out the reaction K(+)(in) = K(+)(out). Channel activity is regulated by variations of cytosolic pH; channels are activated by alkaline and inhibited by acidic pH values. Inhibited by Ba(2+) and Cs(+) in a voltage-dependent manner; sensitivity to those inhibitors is lower than in other Kir channels. In terms of biological role, inward rectifier potassium channels are characterized by a greater tendency to allow potassium to flow into the cell rather than out of it. Their voltage dependence is regulated by the concentration of extracellular potassium; as external potassium is raised, the voltage range of the channel opening shifts to more positive voltages. The chain is ATP-sensitive inward rectifier potassium channel 14 (KCNJ14) from Homo sapiens (Human).